The chain runs to 211 residues: Protein-L-isoaspartate O-methyltransferase (211 aa).

The active site involves serine 62.

Belongs to the methyltransferase superfamily. L-isoaspartyl/D-aspartyl protein methyltransferase family.

It is found in the cytoplasm. The catalysed reaction is [protein]-L-isoaspartate + S-adenosyl-L-methionine = [protein]-L-isoaspartate alpha-methyl ester + S-adenosyl-L-homocysteine. Its function is as follows. Catalyzes the methyl esterification of L-isoaspartyl residues in peptides and proteins that result from spontaneous decomposition of normal L-aspartyl and L-asparaginyl residues. It plays a role in the repair and/or degradation of damaged proteins. This is Protein-L-isoaspartate O-methyltransferase from Shewanella halifaxensis (strain HAW-EB4).